We begin with the raw amino-acid sequence, 433 residues long: Sulfhydrylase FUB7 (433 aa).

Position 211 is an N6-(pyridoxal phosphate)lysine (lysine 211).

Belongs to the trans-sulfuration enzymes family. Requires pyridoxal 5'-phosphate as cofactor.

It functions in the pathway mycotoxin biosynthesis. Sulfhydrylase; part of the gene cluster that mediates the biosynthesis of fusaric acid, a mycotoxin with low to moderate toxicity to animals and humans, but with high phytotoxic properties. L-aspartate is suggested as fusaric acid amino acid precursor that is activated and further processed to O-acetyl-L-homoserine by cluster enzymes aspartate kinase FUB3 and homoserine O-acetyltransferase FUB5, as well as enzymes of the primary metabolism. The polyketide synthase (PKS) FUB1 generates the triketide trans-2-hexenal which is presumptively released by the hydrolase FUB4 and linked to the NRPS-bound amino acid precursor by NAD(P)-dependent dehydrogenase FUB6. FUB1, FUB4, and the non-canonical NRPS Fub8 may form an enzyme complex. Further processing of the NRPS-bound intermediate might be carried out by FUB6 and the O-acetylhomoserine FUB7, enabling a spontaneous electrocyclization to close the carbon backbone of fusaric acid. Dihydrofusaric acid is likely to be released via reduction by the thioester reductase (TR) domain of FUB8 whereupon the final oxidation to fusaric acid may (also) be performed by the FMN-dependent dehydrogenase FUB9. The sequence is that of Sulfhydrylase FUB7 from Gibberella moniliformis (strain M3125 / FGSC 7600) (Maize ear and stalk rot fungus).